Here is a 119-residue protein sequence, read N- to C-terminus: Large ribosomal subunit protein uL22 (119 aa).

This sequence belongs to the universal ribosomal protein uL22 family. Part of the 50S ribosomal subunit.

Its function is as follows. This protein binds specifically to 23S rRNA; its binding is stimulated by other ribosomal proteins, e.g. L4, L17, and L20. It is important during the early stages of 50S assembly. It makes multiple contacts with different domains of the 23S rRNA in the assembled 50S subunit and ribosome. The globular domain of the protein is located near the polypeptide exit tunnel on the outside of the subunit, while an extended beta-hairpin is found that lines the wall of the exit tunnel in the center of the 70S ribosome. This Pelodictyon phaeoclathratiforme (strain DSM 5477 / BU-1) protein is Large ribosomal subunit protein uL22.